We begin with the raw amino-acid sequence, 780 residues long: Endonuclease MutS2 (780 aa).

Residue 334–341 (GPNAGGKT) participates in ATP binding. The Smr domain occupies 706–780 (IDIRGMRSVD…GGSGKTIVEI (75 aa)).

It belongs to the DNA mismatch repair MutS family. MutS2 subfamily. In terms of assembly, homodimer. Binds to stalled ribosomes, contacting rRNA.

Endonuclease that is involved in the suppression of homologous recombination and thus may have a key role in the control of bacterial genetic diversity. Functionally, acts as a ribosome collision sensor, splitting the ribosome into its 2 subunits. Detects stalled/collided 70S ribosomes which it binds and splits by an ATP-hydrolysis driven conformational change. Acts upstream of the ribosome quality control system (RQC), a ribosome-associated complex that mediates the extraction of incompletely synthesized nascent chains from stalled ribosomes and their subsequent degradation. Probably generates substrates for RQC. This is Endonuclease MutS2 from Borreliella burgdorferi (strain ATCC 35210 / DSM 4680 / CIP 102532 / B31) (Borrelia burgdorferi).